We begin with the raw amino-acid sequence, 101 residues long: Small ribosomal subunit protein uS14 (101 aa).

Belongs to the universal ribosomal protein uS14 family. As to quaternary structure, part of the 30S ribosomal subunit. Contacts proteins S3 and S10.

Functionally, binds 16S rRNA, required for the assembly of 30S particles and may also be responsible for determining the conformation of the 16S rRNA at the A site. This Protochlamydia amoebophila (strain UWE25) protein is Small ribosomal subunit protein uS14.